The following is a 429-amino-acid chain: Histidine--tRNA ligase (429 aa).

It belongs to the class-II aminoacyl-tRNA synthetase family. Homodimer.

Its subcellular location is the cytoplasm. It carries out the reaction tRNA(His) + L-histidine + ATP = L-histidyl-tRNA(His) + AMP + diphosphate + H(+). In Prochlorococcus marinus subsp. pastoris (strain CCMP1986 / NIES-2087 / MED4), this protein is Histidine--tRNA ligase.